Reading from the N-terminus, the 623-residue chain is Calnexin (623 aa).

The first 21 residues, 1-21 (MLNRKWSFVFLTFLLVISVNA), serve as a signal peptide directing secretion. Asp-108 lines the Ca(2+) pocket. The cysteines at positions 151 and 185 are disulfide-linked. 4 residues coordinate an alpha-D-glucoside: Tyr-155, Lys-157, Tyr-176, and Asp-183. Asn-202 carries an N-linked (GlcNAc...) asparagine glycan. The segment at 260 to 337 (SLTPPKEIFD…QKPQDWDEDM (78 aa)) is disordered. Residues 266-276 (EIFDETDLKPE) show a composition bias toward basic and acidic residues. Residues 267–400 (IFDETDLKPE…RLIDNPNYFE (134 aa)) form a p domain (Extended arm) region. Tandem repeats lie at residues 269 to 281 (DETD…WDER), 286 to 298 (DETA…WDEN), 305 to 317 (DESA…WNEE), 324 to 336 (DPEA…WDED), and 339 to 349 (GSWEAPLIDNP). 4 X approximate repeats regions lie at residues 269–336 (DETD…WDED) and 339–396 (GSWE…IDNP). Acidic residues-rich tracts occupy residues 277 to 287 (DWDEREQIEDE) and 314 to 323 (WNEEENELIP). An intrachain disulfide couples Cys-351 to Cys-357. 3 consecutive repeat copies span residues 358–368 (GTWKPPTIKNP), 372–382 (GKWVRPKIANP), and 386–396 (GKWSPRLIDNP). An alpha-D-glucoside is bound at residue Glu-416. Asp-427 is a binding site for Ca(2+). A helical transmembrane segment spans residues 480–500 (LWAVYILCILLPLIAIGVFCF). Residues 536 to 623 (IAEDEEDNQP…AKRRTARRGD (88 aa)) form a disordered region. Residues 556-565 (IDEDEQDEVE) are compositionally biased toward acidic residues. Low complexity predominate over residues 566–581 (QQPSSSKTASSESSSA). Positions 614 to 623 (AKRRTARRGD) are enriched in basic residues.

This sequence belongs to the calreticulin family. In terms of processing, glycosylation is important for its biological activity.

It is found in the endoplasmic reticulum membrane. Its subcellular location is the cytoplasm. It localises to the perinuclear region. The protein localises to the cytoplasmic vesicle. Calcium-binding protein that interacts with newly synthesized monoglucosylated glycoproteins in the endoplasmic reticulum. It may act in assisting protein assembly and/or in the retention within the ER of unassembled protein subunits. It seems to play a major role in the quality control apparatus of the ER by the retention of incorrectly folded proteins. Required for embryogenesis and larval development under heat and ER stress conditions. May be important for germ cell development. Involved in neuronal necrotic cell death. This Caenorhabditis briggsae protein is Calnexin.